We begin with the raw amino-acid sequence, 392 residues long: Major outer membrane protein P.IA (392 aa).

Positions 1 to 19 (MRKKLTALVLSALPLAAVA) are cleaved as a signal peptide.

This sequence belongs to the Gram-negative porin family. As to quaternary structure, homotrimer.

Its subcellular location is the cell outer membrane. Functionally, serves as a slightly cation selective porin. Major antigen on the gonococcal cell surface and it may have pathogenic properties in addition to its porin activity. This is Major outer membrane protein P.IA (porA) from Neisseria meningitidis serogroup B / serotype 15 (strain H44/76).